Reading from the N-terminus, the 414-residue chain is Ornithine aminotransferase (414 aa).

The cysteines at positions 154 and 163 are disulfide-linked. An N6-(pyridoxal phosphate)lysine modification is found at lysine 262.

This sequence belongs to the class-III pyridoxal-phosphate-dependent aminotransferase family. In terms of assembly, homodimer. Pyridoxal 5'-phosphate serves as cofactor. The disulfide bond between Cys-154 and Cys-163 is reduced by TRX1 which increases OAT catalytic activity.

The protein resides in the cytoplasm. The catalysed reaction is a 2-oxocarboxylate + L-ornithine = L-glutamate 5-semialdehyde + an L-alpha-amino acid. It carries out the reaction L-ornithine + 2-oxoglutarate = L-glutamate 5-semialdehyde + L-glutamate. It participates in amino-acid biosynthesis; L-proline biosynthesis; L-glutamate 5-semialdehyde from L-ornithine: step 1/1. Its activity is regulated as follows. Unlike for mammalian OATs, activity is increased by TRX1-mediated reduction of the disulfide bond between Cys-154 and Cys-163. Binding to TRX1 may also induce conformational changes that facilitate substrate binding. The enzyme has a very narrow substrate specificity and can only catalyze the transamination of alpha-ketoglutarate with ornithine or N-acetylornithine and, to a lesser extent, of glutamate-5-semialdehyde with glutamate and alanine. This chain is Ornithine aminotransferase, found in Plasmodium falciparum (isolate 3D7).